Reading from the N-terminus, the 199-residue chain is Recombination protein RecR (199 aa).

The C4-type zinc-finger motif lies at 58–73 (CSVCSNLTDIDPCPLC). In terms of domain architecture, Toprim spans 81 to 176 (TVICVVQDPR…KATRIAHGIP (96 aa)).

The protein belongs to the RecR family.

Functionally, may play a role in DNA repair. It seems to be involved in an RecBC-independent recombinational process of DNA repair. It may act with RecF and RecO. The polypeptide is Recombination protein RecR (Ruminiclostridium cellulolyticum (strain ATCC 35319 / DSM 5812 / JCM 6584 / H10) (Clostridium cellulolyticum)).